The chain runs to 488 residues: Zinc metalloproteinase-disintegrin VMP-II (488 aa).

The first 20 residues, 1–20, serve as a signal peptide directing secretion; that stretch reads MIQVLLVTICLAVFPYQGSS. Positions 21–191 are excised as a propeptide; it reads IILESGNVND…KASQSNIPPE (171 aa). The region spanning 198-396 is the Peptidase M12B domain; sequence RYIELVVVAD…STTRCLHNEP (199 aa). Ca(2+) is bound by residues Glu-201 and Asp-285. The N-linked (GlcNAc...) asparagine glycan is linked to Asn-296. Cystine bridges form between Cys-309–Cys-391, Cys-349–Cys-373, and Cys-351–Cys-356. Residue His-334 participates in Zn(2+) binding. Residue Glu-335 is part of the active site. Residues His-338 and His-344 each coordinate Zn(2+). Positions 391, 394, 409, 413, 416, and 419 each coordinate Ca(2+). The 85-residue stretch at 404-488 folds into the Disintegrin domain; the sequence is PPFCGNYFKE…ADCPRNGLYG (85 aa). 7 disulfides stabilise this stretch: Cys-407–Cys-426, Cys-418–Cys-436, Cys-420–Cys-431, Cys-430–Cys-453, Cys-444–Cys-450, Cys-449–Cys-474, and Cys-462–Cys-481. The short motif at 466–468 is the Cell attachment site element; sequence RGD.

It belongs to the venom metalloproteinase (M12B) family. P-II subfamily. P-IIb sub-subfamily. As to quaternary structure, homodimer; disulfide-linked (disintegrin). The cofactor is Zn(2+). Expressed by the venom gland.

It localises to the secreted. Its function is as follows. Zinc metalloproteinase-disintegrin VMP-II: inhibits ADP-induced platelet aggregation (probably by binding integrin alpha-IIb/beta-3 (ITGA2B/ITGB3)) and degrades fibrinogen. Functionally, recombinant disintegrin r-Cam-dis (413-488): this recombinant protein inhibits platelet adhesion to fibrinogen (IC(50) is 1 nM), inhibits collagen- (IC(50) is 18 nM) and ADP-induced (IC(50) is 6 nM) platelet aggregation, and also inhibits platelet function on clot retraction. May act by binding integrin alpha-IIb/beta-3 (ITGA2B/ITGB3). The sequence is that of Zinc metalloproteinase-disintegrin VMP-II from Crotalus adamanteus (Eastern diamondback rattlesnake).